A 424-amino-acid chain; its full sequence is Trigger factor (424 aa).

In terms of domain architecture, PPIase FKBP-type spans 163–248; it reads GDTVVLDFEG…IHEIKAKELP (86 aa).

It belongs to the FKBP-type PPIase family. Tig subfamily.

The protein localises to the cytoplasm. It carries out the reaction [protein]-peptidylproline (omega=180) = [protein]-peptidylproline (omega=0). In terms of biological role, involved in protein export. Acts as a chaperone by maintaining the newly synthesized protein in an open conformation. Functions as a peptidyl-prolyl cis-trans isomerase. This chain is Trigger factor, found in Bacillus licheniformis (strain ATCC 14580 / DSM 13 / JCM 2505 / CCUG 7422 / NBRC 12200 / NCIMB 9375 / NCTC 10341 / NRRL NRS-1264 / Gibson 46).